A 282-amino-acid polypeptide reads, in one-letter code: HTH-type transcriptional activator RhaR (282 aa).

The HTH araC/xylS-type domain occupies 179–277; it reads DKLITALANS…GMTPSQWRHL (99 aa). 2 consecutive DNA-binding regions (H-T-H motif) follow at residues 196-217 and 244-267; these read DAFC…RAQT and VSEI…TRET.

As to quaternary structure, binds DNA as a dimer.

Its subcellular location is the cytoplasm. Activates expression of the rhaSR operon in response to L-rhamnose. In Salmonella choleraesuis (strain SC-B67), this protein is HTH-type transcriptional activator RhaR.